A 91-amino-acid polypeptide reads, in one-letter code: Small ribosomal subunit protein bS20 (91 aa).

The protein belongs to the bacterial ribosomal protein bS20 family.

Binds directly to 16S ribosomal RNA. The sequence is that of Small ribosomal subunit protein bS20 from Mycoplasma mobile (strain ATCC 43663 / 163K / NCTC 11711) (Mesomycoplasma mobile).